We begin with the raw amino-acid sequence, 323 residues long: Homoserine kinase (323 aa).

This sequence belongs to the pseudomonas-type ThrB family.

It catalyses the reaction L-homoserine + ATP = O-phospho-L-homoserine + ADP + H(+). It functions in the pathway amino-acid biosynthesis; L-threonine biosynthesis; L-threonine from L-aspartate: step 4/5. The polypeptide is Homoserine kinase (Phenylobacterium zucineum (strain HLK1)).